A 314-amino-acid polypeptide reads, in one-letter code: Lipoyl synthase (314 aa).

7 residues coordinate [4Fe-4S] cluster: Cys55, Cys60, Cys66, Cys81, Cys85, Cys88, and Ser292. Residues 67–281 enclose the Radical SAM core domain; it reads WEDREATFLI…TQYAEGLGFS (215 aa).

This sequence belongs to the radical SAM superfamily. Lipoyl synthase family. [4Fe-4S] cluster serves as cofactor.

It localises to the cytoplasm. The catalysed reaction is [[Fe-S] cluster scaffold protein carrying a second [4Fe-4S](2+) cluster] + N(6)-octanoyl-L-lysyl-[protein] + 2 oxidized [2Fe-2S]-[ferredoxin] + 2 S-adenosyl-L-methionine + 4 H(+) = [[Fe-S] cluster scaffold protein] + N(6)-[(R)-dihydrolipoyl]-L-lysyl-[protein] + 4 Fe(3+) + 2 hydrogen sulfide + 2 5'-deoxyadenosine + 2 L-methionine + 2 reduced [2Fe-2S]-[ferredoxin]. It functions in the pathway protein modification; protein lipoylation via endogenous pathway; protein N(6)-(lipoyl)lysine from octanoyl-[acyl-carrier-protein]: step 2/2. In terms of biological role, catalyzes the radical-mediated insertion of two sulfur atoms into the C-6 and C-8 positions of the octanoyl moiety bound to the lipoyl domains of lipoate-dependent enzymes, thereby converting the octanoylated domains into lipoylated derivatives. The chain is Lipoyl synthase from Mycobacterium leprae (strain Br4923).